The primary structure comprises 154 residues: Cyanate hydratase (154 aa).

Catalysis depends on residues R100, E103, and S126.

It belongs to the cyanase family.

The catalysed reaction is cyanate + hydrogencarbonate + 3 H(+) = NH4(+) + 2 CO2. In terms of biological role, catalyzes the reaction of cyanate with bicarbonate to produce ammonia and carbon dioxide. This chain is Cyanate hydratase, found in Aspergillus terreus (strain NIH 2624 / FGSC A1156).